Consider the following 214-residue polypeptide: Small ribosomal subunit protein uS5 (214 aa).

Positions 54–117 (LKYEVMDIKI…KNAKMNIIPV (64 aa)) constitute an S5 DRBM domain.

This sequence belongs to the universal ribosomal protein uS5 family. As to quaternary structure, part of the 30S ribosomal subunit. Contacts protein S4.

With S4 and S12 plays an important role in translational accuracy. The protein is Small ribosomal subunit protein uS5 of Sulfurisphaera tokodaii (strain DSM 16993 / JCM 10545 / NBRC 100140 / 7) (Sulfolobus tokodaii).